Reading from the N-terminus, the 283-residue chain is Pantothenate synthetase (283 aa).

30–37 is a binding site for ATP; that stretch reads MGTLHDGH. Catalysis depends on His37, which acts as the Proton donor. Residue Gln61 participates in (R)-pantoate binding. Beta-alanine is bound at residue Gln61. An ATP-binding site is contributed by 148 to 151; the sequence is GLKD. Residue Gln154 participates in (R)-pantoate binding. 185-188 contributes to the ATP binding site; the sequence is MSSR.

The protein belongs to the pantothenate synthetase family. As to quaternary structure, homodimer.

The protein localises to the cytoplasm. It catalyses the reaction (R)-pantoate + beta-alanine + ATP = (R)-pantothenate + AMP + diphosphate + H(+). Its pathway is cofactor biosynthesis; (R)-pantothenate biosynthesis; (R)-pantothenate from (R)-pantoate and beta-alanine: step 1/1. Functionally, catalyzes the condensation of pantoate with beta-alanine in an ATP-dependent reaction via a pantoyl-adenylate intermediate. The protein is Pantothenate synthetase of Leptospira biflexa serovar Patoc (strain Patoc 1 / Ames).